Here is a 295-residue protein sequence, read N- to C-terminus: MDVIDHRIKAYRFVAYAAVGFSVVAVLSVCVTLPIVYNYVHYVRKSLHKEASLCKISTNSVWDDVTVLRLAHFGNRTARQAITSSEENGGCESCCRPGPPGPPGPPGRPGRPGRPGAPGLPGVPGLPPPDGSCEPVSIPPCAECPAGPPGPPGKPGPPGDPGEDGQPGPPGQDGIPGQQGTKGPPGPPGIPGKPGESGEVGEDAECEPVAPGDQGPPGEPGPEGPPGEPGLQGPVGMPGQVGQKGESGSDGQLDFDGSPGRPGPPGPPGRPGEPGICPKYCAIDGGIFFEDGTRR.

The disordered stretch occupies residues 81–278 (AITSSEENGG…GRPGEPGICP (198 aa)). 2 stretches are compositionally biased toward pro residues: residues 97–109 (PGPPGPPGPPGRP) and 146–160 (AGPPGPPGKPGPPGD). Triple-helical region regions lie at residues 98–127 (GPPGPPGPPGRPGRPGRPGAPGLPGVPGLP), 147–203 (GPPG…VGED), and 212–277 (GDQG…PGIC). The segment covering 172-182 (QDGIPGQQGTK) has biased composition (low complexity). The span at 217–228 (PGEPGPEGPPGE) shows a compositional bias: pro residues. The span at 229–244 (PGLQGPVGMPGQVGQK) shows a compositional bias: low complexity. Residues 261–271 (RPGPPGPPGRP) are compositionally biased toward pro residues.

Belongs to the cuticular collagen family.

In terms of biological role, nematode cuticles are composed largely of collagen-like proteins. The cuticle functions both as an exoskeleton and as a barrier to protect the worm from its environment. This Haemonchus contortus (Barber pole worm) protein is Cuticle collagen 3A3 (3A3).